The primary structure comprises 387 residues: Protein RecA (387 aa).

78-85 (GPESSGKT) contacts ATP. The span at 350–369 (QTREVKSIERDPKETKETKS) shows a compositional bias: basic and acidic residues. Residues 350 to 387 (QTREVKSIERDPKETKETKSKQPVSFSTEAEVDIAVGE) form a disordered region.

This sequence belongs to the RecA family.

The protein resides in the cytoplasm. Functionally, can catalyze the hydrolysis of ATP in the presence of single-stranded DNA, the ATP-dependent uptake of single-stranded DNA by duplex DNA, and the ATP-dependent hybridization of homologous single-stranded DNAs. It interacts with LexA causing its activation and leading to its autocatalytic cleavage. The polypeptide is Protein RecA (Leptospira meyeri).